A 402-amino-acid polypeptide reads, in one-letter code: Tryptophan synthase beta chain (402 aa).

At lysine 91 the chain carries N6-(pyridoxal phosphate)lysine.

Belongs to the TrpB family. In terms of assembly, tetramer of two alpha and two beta chains. Requires pyridoxal 5'-phosphate as cofactor.

The catalysed reaction is (1S,2R)-1-C-(indol-3-yl)glycerol 3-phosphate + L-serine = D-glyceraldehyde 3-phosphate + L-tryptophan + H2O. Its pathway is amino-acid biosynthesis; L-tryptophan biosynthesis; L-tryptophan from chorismate: step 5/5. In terms of biological role, the beta subunit is responsible for the synthesis of L-tryptophan from indole and L-serine. The polypeptide is Tryptophan synthase beta chain (trpB) (Lactococcus lactis subsp. lactis (strain IL1403) (Streptococcus lactis)).